Reading from the N-terminus, the 1695-residue chain is Sialoadhesin (1695 aa).

A signal peptide spans 1 to 19 (MCVLFSLLLLASVFSLGQT). Residues 20–136 (TWGVSSPKNV…DVKGTTVTVT (117 aa)) form the Ig-like V-type domain. The Extracellular segment spans residues 20 to 1639 (TWGVSSPKNV…ALHQLQLFQR (1620 aa)). Intrachain disulfides connect Cys-36–Cys-166, Cys-41–Cys-98, Cys-160–Cys-218, and Cys-263–Cys-306. Residues Tyr-63, Arg-116, and 122 to 126 (SNRWL) each bind N-acetylneuraminate. 16 consecutive Ig-like C2-type domains span residues 153–235 (GMER…YLQV), 239–321 (PKGV…SPLS), 326–406 (MAEV…SPLS), 416–508 (PDLT…LDFY), 509–594 (ANVA…TVLT), 602–701 (PTFT…ASFN), 704–781 (ATVL…AQLS), 795–890 (PKLS…FQVR), 894–973 (VQVS…APVS), 980–1079 (PRHV…ADFD), 1081–1161 (QAVR…RPVT), 1172–1264 (RLTY…MNPS), 1245–1337 (KANT…ASLQ), 1342–1439 (PRDA…RLLT), 1442–1520 (DIRV…ATTS), and 1534–1627 (PTLI…AYFG). N-linked (GlcNAc...) asparagine glycosylation is present at Asn-159. N-linked (GlcNAc...) asparagine glycosylation is found at Asn-266, Asn-299, and Asn-340. Disulfide bonds link Cys-347-Cys-391 and Cys-434-Cys-492. An N-linked (GlcNAc...) asparagine glycan is attached at Asn-500. A disulfide bridge connects residues Cys-532 and Cys-576. Asn-583 carries an N-linked (GlcNAc...) asparagine glycan. A disulfide bond links Cys-625 and Cys-685. Residues Asn-693, Asn-722, and Asn-737 are each glycosylated (N-linked (GlcNAc...) asparagine). 2 disulfide bridges follow: Cys-725–Cys-770 and Cys-813–Cys-872. The Cell attachment site motif lies at 827–829 (RGD). Asn-882 carries an N-linked (GlcNAc...) asparagine glycan. Disulfide bonds link Cys-912–Cys-956 and Cys-1001–Cys-1063. N-linked (GlcNAc...) asparagine glycans are attached at residues Asn-1090 and Asn-1100. Intrachain disulfides connect Cys-1103–Cys-1145 and Cys-1189–Cys-1237. A glycan (N-linked (GlcNAc...) asparagine) is linked at Asn-1247. 2 disulfide bridges follow: Cys-1277/Cys-1320 and Cys-1363/Cys-1422. N-linked (GlcNAc...) asparagine glycosylation is found at Asn-1460 and Asn-1474. Cystine bridges form between Cys-1463–Cys-1509 and Cys-1552–Cys-1611. Residues 1640–1660 (LLWVLGFLAGFLCLLLGLVAY) form a helical membrane-spanning segment. The Cytoplasmic portion of the chain corresponds to 1661 to 1695 (HTWRKKSSTKLNEDENSAEMATKKNTIQEEVVAAL).

The protein belongs to the immunoglobulin superfamily. SIGLEC (sialic acid binding Ig-like lectin) family. As to quaternary structure, interacts with CLEC10A. As to expression, detected in lymph node in the subcapsular sinus, interfollicular regions, and T and B-cell boundary (at protein level). Expressed by macrophages in various tissues. Highest expression in spleen and lymph node with lower amounts in lung, liver, bone marrow, heart and skin. No expression in thymus, kidney, brain or small intestine.

It is found in the cell membrane. The protein localises to the secreted. Functionally, macrophage-restricted adhesion molecule that mediates sialic-acid dependent binding to lymphocytes, including granulocytes, monocytes, natural killer cells, B-cells and CD8 T-cells. Plays a crucial role in limiting bacterial dissemination by engaging sialylated bacteria to promote effective phagocytosis and antigen presentation for the adaptive immune response. Mediates the uptake of various enveloped viruses via sialic acid recognition and subsequently induces the formation of intracellular compartments filled with virions (VCCs). In turn, enhances macrophage-to-T-cell transmission of several viruses including murine leukemia virus. Acts as an endocytic receptor mediating clathrin dependent endocytosis. Preferentially binds to alpha-2,3-linked sialic acid. Binds to SPN/CD43 on T-cells. May play a role in hemopoiesis. Plays a role in the inhibition of antiviral innate immune by promoting TBK1 degradation via TYROBP and TRIM27-mediated ubiquitination. The polypeptide is Sialoadhesin (Siglec1) (Mus musculus (Mouse)).